The following is a 690-amino-acid chain: Dual specificity protein kinase lkh1 (690 aa).

Positions 39 to 70 (PNLPPPFSVHQLQSFVPPQPPSSSSPSTTGTV) are disordered. The region spanning 362-682 (YTVVRLLGHG…AKEALWHPFF (321 aa)) is the Protein kinase domain. Residues 368–376 (LGHGTFGKV) and Lys-391 contribute to the ATP site. Asp-488 acts as the Proton acceptor in catalysis.

It belongs to the protein kinase superfamily. CMGC Ser/Thr protein kinase family. Lammer subfamily. Post-translationally, autophosphorylates on all three types of residues.

It carries out the reaction L-seryl-[protein] + ATP = O-phospho-L-seryl-[protein] + ADP + H(+). It catalyses the reaction L-threonyl-[protein] + ATP = O-phospho-L-threonyl-[protein] + ADP + H(+). The enzyme catalyses L-tyrosyl-[protein] + ATP = O-phospho-L-tyrosyl-[protein] + ADP + H(+). Its function is as follows. Protein kinase that may act as a negative regulator of filamentous growth and flocculation. Appears to have a role in normal cell wall and septum formation and in cell separation. May have antagonistic function in the regulation of beta-glucan distribution between the sites for cell wall and septum assembly. The polypeptide is Dual specificity protein kinase lkh1 (lkh1) (Schizosaccharomyces pombe (strain 972 / ATCC 24843) (Fission yeast)).